The primary structure comprises 860 residues: Leucine--tRNA ligase (860 aa).

A 'HIGH' region motif is present at residues 42 to 52; sequence PYPSGRLHMGH. The 'KMSKS' region signature appears at 619–623; sequence KMSKS. Residue lysine 622 participates in ATP binding.

It belongs to the class-I aminoacyl-tRNA synthetase family.

Its subcellular location is the cytoplasm. It carries out the reaction tRNA(Leu) + L-leucine + ATP = L-leucyl-tRNA(Leu) + AMP + diphosphate. This Escherichia coli O45:K1 (strain S88 / ExPEC) protein is Leucine--tRNA ligase.